The chain runs to 579 residues: Ribonucleoside-diphosphate reductase small chain (579 aa).

Residues D130, E160, and H163 each coordinate Fe cation. Y167 is a catalytic residue. Fe cation is bound by residues E225, E258, and H261. Residues 435 to 579 (DMTWTLKDVH…VSVFVDQFYR (145 aa)) enclose the Fido domain.

It belongs to the ribonucleoside diphosphate reductase small chain family. Heterotetramer composed of a homodimer of the large subunit (R1) and a homodimer of the small subunit (R2). Larger multisubunit protein complex are also active, composed of (R1)n(R2)n. The cofactor is Fe cation.

The enzyme catalyses a 2'-deoxyribonucleoside 5'-diphosphate + [thioredoxin]-disulfide + H2O = a ribonucleoside 5'-diphosphate + [thioredoxin]-dithiol. Functionally, ribonucleoside-diphosphate reductase holoenzyme provides the precursors necessary for viral DNA synthesis. Allows virus growth in non-dividing cells. Catalyzes the biosynthesis of deoxyribonucleotides from the corresponding ribonucleotides. In Magallana gigas (Pacific oyster), this protein is Ribonucleoside-diphosphate reductase small chain.